Reading from the N-terminus, the 1366-residue chain is DNA-directed RNA polymerase subunit beta (1366 aa).

The protein belongs to the RNA polymerase beta chain family. The RNAP catalytic core consists of 2 alpha, 1 beta, 1 beta' and 1 omega subunit. When a sigma factor is associated with the core the holoenzyme is formed, which can initiate transcription.

It catalyses the reaction RNA(n) + a ribonucleoside 5'-triphosphate = RNA(n+1) + diphosphate. In terms of biological role, DNA-dependent RNA polymerase catalyzes the transcription of DNA into RNA using the four ribonucleoside triphosphates as substrates. This is DNA-directed RNA polymerase subunit beta from Polynucleobacter necessarius subsp. necessarius (strain STIR1).